A 644-amino-acid chain; its full sequence is MSKEKIIGIDLGTTNSCVAVMEGGDPVVIQNSEGARTTPSIVAFTAKGETIVGQFAKNQAITNAVNTIRSAKRFIGRRFNEAGDESKMVSYKVIRAGNDGVKFETVSGEFTPQEIAARVLQKMKKTAEDFLGHEVKKAVVTVPAYFNDEQRQATKDAGRIAGLEVERIINEPTAAALAYGFDKKKTNAKIAVYDLGGGTFDVSILELGDGVFEVKSTNGDTHLGGDDFDNVVMQWMIDEFKKQTGIDISGDKNTVQRLKEAAEKAKIELSGTSSTQINLPFITADASGPKHLDMTLTKAKFDEITRSLVERTRIPCINALKDAGLSASEIDEVILVGGSIRIPAVQALVKEIFGKEPNKSVNPDEVVAVGAAIQGGVLAGDVTDVLLLDVTPLSLGIETLGGVMTKLIERNTTIPTRKSQVFSTAADNQTTVSVHVLQGEREMASANRTLGRFDLVGIPSAPRGVPQIEVTFDIDANGIVHVSAKDLGTGKEQKIRIESSSGLSEEEIKKMVKDAEAHAEEDKKLREAADTKNELEAIVYQLEKTIGESADKLDESEKQRAQDEIKRGREAMESGDLERMKASRDSIQQVAMQIGQKIYSQAGPEQGAPGAEAGAGASQGASGTDANGEKVVDADYTVVDEDKK.

Phosphothreonine; by autocatalysis is present on Thr199. The segment covering 550-584 has biased composition (basic and acidic residues); that stretch reads ADKLDESEKQRAQDEIKRGREAMESGDLERMKASR. Disordered stretches follow at residues 550 to 586 and 599 to 644; these read ADKL…SRDS and YSQA…EDKK. A compositionally biased stretch (low complexity) spans 600 to 623; the sequence is SQAGPEQGAPGAEAGAGASQGASG.

Belongs to the heat shock protein 70 family.

Its function is as follows. Acts as a chaperone. This Leptospira biflexa serovar Patoc (strain Patoc 1 / Ames) protein is Chaperone protein DnaK.